The primary structure comprises 370 residues: Alanine racemase (370 aa).

Lysine 39 acts as the Proton acceptor; specific for D-alanine in catalysis. Lysine 39 bears the N6-(pyridoxal phosphate)lysine mark. Arginine 137 is a binding site for substrate. Tyrosine 258 serves as the catalytic Proton acceptor; specific for L-alanine. Residue methionine 306 participates in substrate binding.

This sequence belongs to the alanine racemase family. Pyridoxal 5'-phosphate serves as cofactor.

The enzyme catalyses L-alanine = D-alanine. The protein operates within amino-acid biosynthesis; D-alanine biosynthesis; D-alanine from L-alanine: step 1/1. Functionally, catalyzes the interconversion of L-alanine and D-alanine. May also act on other amino acids. This is Alanine racemase (alr) from Methylobacterium nodulans (strain LMG 21967 / CNCM I-2342 / ORS 2060).